The chain runs to 190 residues: Protein GrpE (190 aa).

Residues 21 to 49 (DDLQEEVEATETEETVEEVIEETPEKSEL) form a disordered region. Acidic residues predominate over residues 23–42 (LQEEVEATETEETVEEVIEE).

Belongs to the GrpE family. In terms of assembly, homodimer.

It localises to the cytoplasm. Participates actively in the response to hyperosmotic and heat shock by preventing the aggregation of stress-denatured proteins, in association with DnaK and GrpE. It is the nucleotide exchange factor for DnaK and may function as a thermosensor. Unfolded proteins bind initially to DnaJ; upon interaction with the DnaJ-bound protein, DnaK hydrolyzes its bound ATP, resulting in the formation of a stable complex. GrpE releases ADP from DnaK; ATP binding to DnaK triggers the release of the substrate protein, thus completing the reaction cycle. Several rounds of ATP-dependent interactions between DnaJ, DnaK and GrpE are required for fully efficient folding. In Streptococcus pyogenes serotype M3 (strain SSI-1), this protein is Protein GrpE.